A 372-amino-acid polypeptide reads, in one-letter code: Dual-specificity RNA methyltransferase RlmN (372 aa).

Residue E94 is the Proton acceptor of the active site. A Radical SAM core domain is found at 100-339 (DGDRATLCVS…VTIRKTRGDD (240 aa)). An intrachain disulfide couples C107 to C344. Positions 114, 118, and 121 each coordinate [4Fe-4S] cluster. Residues 168-169 (GE), S200, 222-224 (SLH), and N301 each bind S-adenosyl-L-methionine. C344 serves as the catalytic S-methylcysteine intermediate.

This sequence belongs to the radical SAM superfamily. RlmN family. Requires [4Fe-4S] cluster as cofactor.

The protein resides in the cytoplasm. It carries out the reaction adenosine(2503) in 23S rRNA + 2 reduced [2Fe-2S]-[ferredoxin] + 2 S-adenosyl-L-methionine = 2-methyladenosine(2503) in 23S rRNA + 5'-deoxyadenosine + L-methionine + 2 oxidized [2Fe-2S]-[ferredoxin] + S-adenosyl-L-homocysteine. It catalyses the reaction adenosine(37) in tRNA + 2 reduced [2Fe-2S]-[ferredoxin] + 2 S-adenosyl-L-methionine = 2-methyladenosine(37) in tRNA + 5'-deoxyadenosine + L-methionine + 2 oxidized [2Fe-2S]-[ferredoxin] + S-adenosyl-L-homocysteine. Specifically methylates position 2 of adenine 2503 in 23S rRNA and position 2 of adenine 37 in tRNAs. m2A2503 modification seems to play a crucial role in the proofreading step occurring at the peptidyl transferase center and thus would serve to optimize ribosomal fidelity. The polypeptide is Dual-specificity RNA methyltransferase RlmN (Aliivibrio fischeri (strain ATCC 700601 / ES114) (Vibrio fischeri)).